Consider the following 139-residue polypeptide: Thyrotropin subunit beta (139 aa).

A signal peptide spans 1 to 20 (MELSVAMCGLLCLLFSQAVP). 6 disulfides stabilise this stretch: cysteine 22–cysteine 72, cysteine 36–cysteine 87, cysteine 39–cysteine 127, cysteine 47–cysteine 103, cysteine 51–cysteine 105, and cysteine 108–cysteine 115. Asparagine 43 carries an N-linked (GlcNAc...) asparagine glycan.

Belongs to the glycoprotein hormones subunit beta family. Heterodimer of a common alpha chain and a unique beta chain which confers biological specificity to thyrotropin, lutropin, follitropin and gonadotropin.

It localises to the secreted. Indispensable for the control of thyroid structure and metabolism. May play some role in the biological processes of the immature fishes. The polypeptide is Thyrotropin subunit beta (tshb) (Salmo salar (Atlantic salmon)).